The primary structure comprises 665 residues: Coiled-coil domain-containing protein 138 (665 aa).

Threonine 48 carries the phosphothreonine modification. Serine 49 bears the Phosphoserine mark. Residues 198–323 are a coiled coil; the sequence is QQKFAEELQK…YEFMTIQRLK (126 aa). Serine 469 bears the Phosphoserine mark.

The polypeptide is Coiled-coil domain-containing protein 138 (CCDC138) (Homo sapiens (Human)).